A 184-amino-acid chain; its full sequence is Ferredoxin-thioredoxin reductase subunit A2, chloroplastic (184 aa).

The transit peptide at methionine 1–arginine 71 directs the protein to the chloroplast.

This sequence belongs to the ferredoxin thioredoxin reductase alpha subunit family. Heterodimer of subunit A (variable subunit) and subunit B (catalytic subunit). Heterodimeric FTR forms a complex with ferredoxin and thioredoxin.

Its subcellular location is the plastid. The protein localises to the chloroplast. Its function is as follows. Variable subunit of the ferredoxin-thioredoxin reductase (FTR), which catalyzes the two-electron reduction of thioredoxins by the electrons provided by reduced ferredoxin. This chain is Ferredoxin-thioredoxin reductase subunit A2, chloroplastic, found in Arabidopsis thaliana (Mouse-ear cress).